Here is a 323-residue protein sequence, read N- to C-terminus: Aquaporin-4 (323 aa).

Topologically, residues 1 to 36 are cytoplasmic; it reads MSDGAAARRWGKCGHSCSRESIMVAFKGVWTQAFWK. Residues Cys-13 and Cys-17 are each lipidated (S-palmitoyl cysteine). Residues 37–57 traverse the membrane as a helical segment; sequence AVSAEFLATLIFVLLGVGSTI. The Extracellular portion of the chain corresponds to 58-69; it reads NWGGSENPLPVD. The helical transmembrane segment at 70 to 89 threads the bilayer; it reads MVLISLCFGLSIATMVQCFG. Residues 90 to 93 are Cytoplasmic-facing; that stretch reads HISG. An intramembrane region (discontinuously helical) is located at residues 94–101; sequence GHINPAVT. Residues 97-99 carry the NPA 1 motif; the sequence is NPA. Over 102 to 115 the chain is Cytoplasmic; it reads VAMVCTRKISIAKS. At Ser-111 the chain carries Phosphoserine; by PKG. A helical transmembrane segment spans residues 116-136; sequence VFYIIAQCLGAIIGAGILYLV. Residues 137–155 are Extracellular-facing; the sequence is TPPSVVGGLGVTTVHGNLT. Asn-153 is a glycosylation site (N-linked (GlcNAc...) asparagine). A helical membrane pass occupies residues 156–176; sequence AGHGLLVELIITFQLVFTIFA. Over 177-184 the chain is Cytoplasmic; it reads SCDSKRTD. Phosphoserine; by PKC is present on Ser-180. Residues 185–205 form a helical membrane-spanning segment; sequence VTGSIALAIGFSVAIGHLFAI. N-linked (GlcNAc...) asparagine glycosylation is present at Asn-206. Topologically, residues 206-208 are extracellular; sequence NYT. The segment at residues 209-222 is an intramembrane region (discontinuously helical); that stretch reads GASMNPARSFGPAV. The NPA 2 motif lies at 213–215; sequence NPA. At 223–231 the chain is on the extracellular side; that stretch reads IMGNWANHW. Residues 232–252 traverse the membrane as a helical segment; that stretch reads IYWVGPIMGAVLAGALYEYVF. At 253–323 the chain is on the cytoplasmic side; that stretch reads CPDVELKRRL…DSSGEVLSSV (71 aa). Residues Ser-276 and Ser-285 each carry the phosphoserine modification. Residue Thr-289 is modified to Phosphothreonine. Residue Ser-321 is modified to Phosphoserine.

Belongs to the MIP/aquaporin (TC 1.A.8) family. As to quaternary structure, homotetramer. The tetramers can form oligomeric arrays in membranes. The size of the oligomers differs between tissues and is smaller in skeletal muscle than in brain. Interaction between AQP4 oligomeric arrays in close-by cells can contribute to cell-cell adhesion. Part of a complex containing MLC1, TRPV4, HEPACAM and ATP1B1. Post-translationally, phosphorylation by PKC at Ser-180 reduces conductance by 50%. Phosphorylation by PKG at Ser-111 in response to glutamate increases conductance by 40%; this increase is not due to increased presence at the cell membrane. In terms of processing, isoform 2: Palmitoylated on its N-terminal region. Isoform 1: Not palmitoylated. Detected in brain cortex, especially around cortical blood vessels, and subjacent to pia, with lower levels in parenchymal membranes. Detected in ependymal and astroglial cells in brain. Detected in supporting Hensen's cells, inner sulcus cells and Claudius cells in the inner ear. Detected in skeletal muscle. Detected in gastric parietal cells. Detected in principal cells in collecting ducts in kidney medulla (at protein level). Detected in brain, heart and skeletal muscle.

It localises to the cell membrane. Its subcellular location is the basolateral cell membrane. The protein resides in the endosome membrane. It is found in the sarcolemma. The protein localises to the cell projection. The catalysed reaction is H2O(in) = H2O(out). In terms of biological role, forms a water-specific channel. Plays an important role in brain water homeostasis and in glymphatic solute transport. Required for a normal rate of water exchange across the blood brain interface. Required for normal levels of cerebrospinal fluid influx into the brain cortex and parenchyma along paravascular spaces that surround penetrating arteries, and for normal drainage of interstitial fluid along paravenous drainage pathways. Thereby, it is required for normal clearance of solutes from the brain interstitial fluid, including soluble beta-amyloid peptides derived from APP. Plays a redundant role in urinary water homeostasis and urinary concentrating ability. This is Aquaporin-4 (Aqp4) from Mus musculus (Mouse).